Here is a 98-residue protein sequence, read N- to C-terminus: Citrate lyase acyl carrier protein (98 aa).

Ser-14 is subject to O-(phosphoribosyl dephospho-coenzyme A)serine.

Belongs to the CitD family. Oligomer with a subunit composition of (alpha,beta,gamma)6.

It localises to the cytoplasm. Covalent carrier of the coenzyme of citrate lyase. The polypeptide is Citrate lyase acyl carrier protein (Shigella flexneri).